Here is a 284-residue protein sequence, read N- to C-terminus: Nucleotide-binding protein SO_3964 (284 aa).

8–15 (GRSGSGKS) contacts ATP. Position 56–59 (56–59 (DVRN)) interacts with GTP.

It belongs to the RapZ-like family.

Displays ATPase and GTPase activities. In Shewanella oneidensis (strain ATCC 700550 / JCM 31522 / CIP 106686 / LMG 19005 / NCIMB 14063 / MR-1), this protein is Nucleotide-binding protein SO_3964.